Here is a 123-residue protein sequence, read N- to C-terminus: Basic phospholipase A2 Ph-TX1 (123 aa).

3 residues coordinate Ca(2+): Y27, G29, and G31. Disulfide bonds link C28–C45, C44–C96, C50–C123, C51–C89, C59–C83, and C77–C87. H48 is an active-site residue. D49 contributes to the Ca(2+) binding site. D90 is an active-site residue.

It belongs to the phospholipase A2 family. Group II subfamily. D49 sub-subfamily. As to quaternary structure, monomer. Ca(2+) is required as a cofactor. In terms of tissue distribution, expressed by the venom gland.

The protein resides in the secreted. The enzyme catalyses a 1,2-diacyl-sn-glycero-3-phosphocholine + H2O = a 1-acyl-sn-glycero-3-phosphocholine + a fatty acid + H(+). Inhibited by divalent cations different from calcium ions (cadmium, magnesium, manganese, zinc), since they act as competitive antagonists of this cofactor. Functionally, snake venom phospholipase A2 (PLA2) that induces in vivo myotoxicity, moderates footpad edema, and causes in vitro neuromuscular blockade. PLA2 catalyzes the calcium-dependent hydrolysis of the 2-acyl groups in 3-sn-phosphoglycerides. The protein is Basic phospholipase A2 Ph-TX1 of Bothrocophias hyoprora (Amazonian hognose viper).